The primary structure comprises 1141 residues: MDALRKLGSLGRRRDEVDTASSPLKNEASAAEIPRDPVQISGKDEASPSGLTPIRVRVPEDVRSESEVKRDGDEESVGSGESFDSALERMEASSITSFEPPSPMESIDGRFQFEDGVREDLAESGLDGNFSYDDDDDDEEEEEDGSEEGESTSSSIINSEYSSSASNTEDEMDISGYGASSARTMLVSNDASKSDEEAIDEPKYKLRNVVTGEENMSGGLSVENEARGVALSSWKSELEDFYEASLEDNDVQEELAEKIIKVASEQNDEEDEEVHFPVIANELPGRITRNRTMIDSPAHLYSAVKAVDSTLPALKSESTKSITQGFVEAEEAESDVFTEGEDGYDDEDEDGDIQMDVSQATEKSGTPDESESNPSMGAGGPRLPSLPQRSSARRSAATTATGVPRPNTASSTQSAATSDASISSESSEANEIREKLQNIRIKFLRLARRLNQSPQNVVVAQVLYRLGLAESLRGGSSLNRTRAFSFDHANALAEEQEAAKYEDLDFACTILVLGKTGVGKSATINSIFDECKTVTSAYYPSTTKVHEVSGTVLGVKVRFIDTPGLLPSTADQRHNKNIMRQVKKYIKKVSPDIVLYFDRMDMQTRDSGDVPLLRTITDVFGAAVWFNATVVLTHASKAPPDGSNGTPMSYDYFVAQRSHFVQQTIRQAAGDARLQNPVSLVENHPACRINRSGQRVLPNGQPWKQQLLLLCFASKILAEANTLLKLQEASTPGKPFGQRSRVPPLPYLLSSLLQSRAQLKMPDEQHGESEDSDDDSDEEDEEEGDEYDDLPPFRPLSKQELEDLSKEQRQEYAEELADRERLFQKKQYREQIRRRRERKKQASVMSKEEPSIPGDGAEDESGQPATVAVPMPDMALPPSFDSDNPTHRYRYLETANQWLVRPVLETHGWDHDAGYDGFNVEKMFVVKEKIPASVSGQVTKDKKEAQVNFEAAASLRHGEGKVTLTGFDVQTIGKDLAYTVRAETRFNNFKRNKTTAGVTATYLNDTIAAGVKLEDRVLIGKRVKLVVNGGVLTGKGDKAYGGSLEATLRGKEYPLSRTLSTLGLSVMDWHGDLAIGGNLQSQFMVGKTMMVGRANLNNRGSGQVSIRASSSEQLQMVLIGIVPILRSLINCRFGFGGQPQQ.

Disordered stretches follow at residues 1–177 (MDAL…ISGY) and 325–431 (GFVE…EANE). Composition is skewed to basic and acidic residues over residues 57–72 (RVPE…KRDG) and 107–121 (IDGR…REDL). The segment covering 132–150 (YDDDDDDEEEEEDGSEEGE) has biased composition (acidic residues). The span at 151-167 (STSSSIINSEYSSSASN) shows a compositional bias: low complexity. Acidic residues predominate over residues 328-353 (EAEEAESDVFTEGEDGYDDEDEDGDI). Composition is skewed to low complexity over residues 389-401 (RSSA…TTAT) and 408-429 (TASS…SSEA). The region spanning 505-734 (DFACTILVLG…KLQEASTPGK (230 aa)) is the AIG1-type G domain. Positions 514 to 521 (GKTGVGKS) are G1. Position 517 to 522 (517 to 522 (GVGKSA)) interacts with GTP. Ser-521 provides a ligand contact to Mg(2+). Positions 541–545 (STTKV) are G2. Positions 561–564 (DTPG) are G3. The G4 stretch occupies residues 633 to 636 (THAS). GTP is bound by residues His-634 and 682-683 (EN). The G5 stretch occupies residues 682-684 (ENH). Disordered regions lie at residues 758–795 (QLKM…PFRP) and 832–871 (IRRR…AVPM). A compositionally biased stretch (acidic residues) spans 770-789 (EDSDDDSDEEDEEEGDEYDD). Residues 832 to 841 (IRRRRERKKQ) show a composition bias toward basic residues. A helical membrane pass occupies residues 1116–1136 (MVLIGIVPILRSLINCRFGFG).

This sequence belongs to the TRAFAC class TrmE-Era-EngA-EngB-Septin-like GTPase superfamily. AIG1/Toc34/Toc159-like paraseptin GTPase family. TOC159 subfamily. In terms of assembly, part of the TOC core complex. Requires Mg(2+) as cofactor.

It is found in the plastid. The protein resides in the chloroplast outer membrane. Its function is as follows. GTPase involved in protein precursor import into chloroplasts. Seems to recognize chloroplast-destined precursor proteins and regulate their presentation to the translocation channel through GTP hydrolysis. Probably specialized in the import of nuclear encoded non-photosynthetic preproteins from the cytoplasm to the chloroplast. The chain is Translocase of chloroplast 125, chloroplastic from Physcomitrium patens (Spreading-leaved earth moss).